The following is a 177-amino-acid chain: ATP-dependent protease subunit HslV (177 aa).

Residue Thr6 is part of the active site. Na(+) contacts are provided by Ser161, Cys164, and Thr167.

This sequence belongs to the peptidase T1B family. HslV subfamily. As to quaternary structure, a double ring-shaped homohexamer of HslV is capped on each side by a ring-shaped HslU homohexamer. The assembly of the HslU/HslV complex is dependent on binding of ATP.

The protein localises to the cytoplasm. The catalysed reaction is ATP-dependent cleavage of peptide bonds with broad specificity.. With respect to regulation, allosterically activated by HslU binding. Protease subunit of a proteasome-like degradation complex believed to be a general protein degrading machinery. The sequence is that of ATP-dependent protease subunit HslV from Thermodesulfovibrio yellowstonii (strain ATCC 51303 / DSM 11347 / YP87).